The primary structure comprises 105 residues: Phosphoribosyl-AMP cyclohydrolase (105 aa).

Position 72 (aspartate 72) interacts with Mg(2+). Position 73 (cysteine 73) interacts with Zn(2+). Mg(2+)-binding residues include aspartate 74 and aspartate 76. Residues cysteine 89 and cysteine 96 each coordinate Zn(2+).

It belongs to the PRA-CH family. As to quaternary structure, homodimer. Requires Mg(2+) as cofactor. The cofactor is Zn(2+).

The protein localises to the cytoplasm. It catalyses the reaction 1-(5-phospho-beta-D-ribosyl)-5'-AMP + H2O = 1-(5-phospho-beta-D-ribosyl)-5-[(5-phospho-beta-D-ribosylamino)methylideneamino]imidazole-4-carboxamide. It functions in the pathway amino-acid biosynthesis; L-histidine biosynthesis; L-histidine from 5-phospho-alpha-D-ribose 1-diphosphate: step 3/9. Catalyzes the hydrolysis of the adenine ring of phosphoribosyl-AMP. This Listeria monocytogenes serotype 4b (strain CLIP80459) protein is Phosphoribosyl-AMP cyclohydrolase.